Here is a 296-residue protein sequence, read N- to C-terminus: Nitrogenase iron protein (296 aa).

Residue 11 to 18 (GKGGIGKS) participates in ATP binding. [4Fe-4S] cluster is bound at residue C99. ADP-ribosylarginine; by dinitrogenase reductase ADP-ribosyltransferase is present on R102. C133 contacts [4Fe-4S] cluster.

It belongs to the NifH/BchL/ChlL family. In terms of assembly, homodimer. The cofactor is [4Fe-4S] cluster. The reversible ADP-ribosylation of Arg-102 inactivates the nitrogenase reductase and regulates nitrogenase activity.

It catalyses the reaction N2 + 8 reduced [2Fe-2S]-[ferredoxin] + 16 ATP + 16 H2O = H2 + 8 oxidized [2Fe-2S]-[ferredoxin] + 2 NH4(+) + 16 ADP + 16 phosphate + 6 H(+). In terms of biological role, the key enzymatic reactions in nitrogen fixation are catalyzed by the nitrogenase complex, which has 2 components: the iron protein and the molybdenum-iron protein. This chain is Nitrogenase iron protein (nifH1), found in Sinorhizobium fredii (strain NBRC 101917 / NGR234).